The sequence spans 200 residues: Nucleoside triphosphate pyrophosphatase (200 aa).

The active-site Proton acceptor is aspartate 79.

The protein belongs to the Maf family. It depends on a divalent metal cation as a cofactor.

The protein resides in the cytoplasm. The enzyme catalyses a ribonucleoside 5'-triphosphate + H2O = a ribonucleoside 5'-phosphate + diphosphate + H(+). It carries out the reaction a 2'-deoxyribonucleoside 5'-triphosphate + H2O = a 2'-deoxyribonucleoside 5'-phosphate + diphosphate + H(+). In terms of biological role, nucleoside triphosphate pyrophosphatase. May have a dual role in cell division arrest and in preventing the incorporation of modified nucleotides into cellular nucleic acids. The sequence is that of Nucleoside triphosphate pyrophosphatase from Legionella pneumophila (strain Lens).